The sequence spans 494 residues: Serine/threonine-protein kinase cst-1 (494 aa).

The interval 1–27 (MPPSTDSSRRNSEEGFSDGFKLDSSAL) is disordered. Residues 35–286 (FDIVGKLGEG…ALRLCEHTFI (252 aa)) enclose the Protein kinase domain. Residues 41-49 (LGEGSYGSV) and lysine 64 contribute to the ATP site. Aspartate 154 acts as the Proton acceptor in catalysis. The interval 364 to 413 (IPKSAYGSSRNNGSPRVQPPGHTASACDPSNNPPFAEEGTGPNFQIGTSE) is disordered. The segment covering 369–378 (YGSSRNNGSP) has biased composition (polar residues). The SARAH domain occupies 443-490 (FEFLRNITLDELIRRKESLDSEMEEEIRELQRRYKTKRQPILDVIEIK).

Belongs to the protein kinase superfamily. STE Ser/Thr protein kinase family. STE20 subfamily. Requires Mg(2+) as cofactor. Post-translationally, proteolytically cleaved by caspase-3 during apoptosis which results in kinase activation.

It carries out the reaction L-seryl-[protein] + ATP = O-phospho-L-seryl-[protein] + ADP + H(+). The catalysed reaction is L-threonyl-[protein] + ATP = O-phospho-L-threonyl-[protein] + ADP + H(+). In terms of biological role, serine/threonine-protein kinase which extends lifespan and delays tissue aging, probably by activating daf-16. The polypeptide is Serine/threonine-protein kinase cst-1 (cst-1) (Caenorhabditis briggsae).